The following is a 368-amino-acid chain: N-acetylneuraminate epimerase (368 aa).

Residues 1-19 (MNKTITALAIMMASFAANA) form the signal peptide. Kelch repeat units follow at residues 40-84 (TVYI…AFID), 86-137 (NLYV…FVHN), 139-173 (KAYV…KINA), 174-219 (YYFD…VNKG), 222-265 (TWLI…VAGG), 287-336 (ENYQ…PWNN), and 338-367 (LLII…VTVQ). The active-site Proton acceptor is the E228.

It belongs to the NanM family. In terms of assembly, homodimer.

It is found in the periplasm. The catalysed reaction is N-acetyl-alpha-neuraminate = N-acetyl-beta-neuraminate. Its function is as follows. Converts alpha-N-acetylneuranimic acid (Neu5Ac) to the beta-anomer, accelerating the equilibrium between the alpha- and beta-anomers. Probably facilitates sialidase-negative bacteria to compete successfully for limited amounts of extracellular Neu5Ac, which is likely taken up in the beta-anomer. In addition, the rapid removal of sialic acid from solution might be advantageous to the bacterium to damp down host responses. This is N-acetylneuraminate epimerase from Shigella boydii serotype 4 (strain Sb227).